A 627-amino-acid chain; its full sequence is Capsid vertex component 2 (627 aa).

Residues 1 to 56 (MFGRGLPPLKFGQIGGDGWSTVLADPGNRLIVANAHRSEPRLRVETLIREELLTSR) are interaction with major capsid protein/MCP. A disordered region spans residues 458-480 (LSGDGDPIRAPGSRPPAAAEATL).

The protein belongs to the herpesviridae CVC2 protein family. In terms of assembly, heterodimerizes with CVC1. Interacts with major capsid protein/MCP and triplex capsid protein 1/TRX1 at the pentamer vertices. Interacts with the large tegument protein/LTP.

Its subcellular location is the virion. It localises to the host nucleus. In terms of biological role, capsid vertex-specific component that plays a role during viral DNA encapsidation, assuring correct genome cleavage and presumably stabilizing capsids that contain full-length viral genomes. Participates in the interaction between the capsid and the tegument through interaction with the large tegument protein/LTP. This is Capsid vertex component 2 from Psittacid herpesvirus 1 (isolate Amazon parrot/-/97-0001/1997) (PsHV-1).